Here is a 169-residue protein sequence, read N- to C-terminus: Putative hydrolase 111R (169 aa).

A Nudix hydrolase domain is found at 46-169; it reads FEKRKAGVFV…QKILMALSCN (124 aa). The short motif at 76–98 is the Nudix box element; sequence GHMEAYDHSPKTCAERELKEETG. Mg(2+) contacts are provided by Glu92, Glu96, and Asp138.

It belongs to the Nudix hydrolase family. Mg(2+) is required as a cofactor. It depends on Mn(2+) as a cofactor.

This chain is Putative hydrolase 111R, found in Aedes vexans (Inland floodwater mosquito).